Consider the following 345-residue polypeptide: Uroporphyrinogen decarboxylase (345 aa).

Residues 27–31, Phe46, Asp76, Tyr152, Ser207, and His320 each bind substrate; that span reads RQAGR.

The protein belongs to the uroporphyrinogen decarboxylase family. Homodimer.

The protein resides in the cytoplasm. The catalysed reaction is uroporphyrinogen III + 4 H(+) = coproporphyrinogen III + 4 CO2. Its pathway is porphyrin-containing compound metabolism; protoporphyrin-IX biosynthesis; coproporphyrinogen-III from 5-aminolevulinate: step 4/4. Functionally, catalyzes the decarboxylation of four acetate groups of uroporphyrinogen-III to yield coproporphyrinogen-III. This chain is Uroporphyrinogen decarboxylase, found in Geobacillus thermodenitrificans (strain NG80-2).